We begin with the raw amino-acid sequence, 96 residues long: Small ribosomal subunit protein bS6 (96 aa).

Belongs to the bacterial ribosomal protein bS6 family.

In terms of biological role, binds together with bS18 to 16S ribosomal RNA. In Streptococcus equi subsp. zooepidemicus (strain MGCS10565), this protein is Small ribosomal subunit protein bS6.